Reading from the N-terminus, the 147-residue chain is Interleukin-4 (147 aa).

The N-terminal stretch at 1-24 (MGLPAQLPVTLLCLLAGTAHFIQG) is a signal peptide. A disulfide bridge connects residues cysteine 48 and cysteine 88. N-linked (GlcNAc...) asparagine glycosylation is present at asparagine 62.

This sequence belongs to the IL-4/IL-13 family.

It localises to the secreted. Participates in at least several B-cell activation processes as well as of other cell types. It is a costimulator of DNA-synthesis. It induces the expression of class II MHC molecules on resting B-cells. It enhances both secretion and cell surface expression of IgE and IgG1. It also regulates the expression of the low affinity Fc receptor for IgE (CD23) on both lymphocytes and monocytes. Positively regulates IL31RA expression in macrophages. Stimulates autophagy in dendritic cells by interfering with mTORC1 signaling and through the induction of RUFY4. In Oryctolagus cuniculus (Rabbit), this protein is Interleukin-4 (IL4).